The chain runs to 205 residues: Ribonuclease HII (205 aa).

The RNase H type-2 domain occupies 14–205; it reads ERICGIDEAG…SFKVRRLNEA (192 aa). A divalent metal cation-binding residues include aspartate 20, glutamate 21, and aspartate 117.

Belongs to the RNase HII family. Mn(2+) is required as a cofactor. It depends on Mg(2+) as a cofactor.

It localises to the cytoplasm. The catalysed reaction is Endonucleolytic cleavage to 5'-phosphomonoester.. Its function is as follows. Endonuclease that specifically degrades the RNA of RNA-DNA hybrids. The protein is Ribonuclease HII of Chlorobium phaeovibrioides (strain DSM 265 / 1930) (Prosthecochloris vibrioformis (strain DSM 265)).